The primary structure comprises 504 residues: Glutamate--tRNA ligase (504 aa).

The 'HIGH' region signature appears at 9–19 (PSPTGDPHVGT). Positions 248 to 252 (KISKR) match the 'KMSKS' region motif. An ATP-binding site is contributed by lysine 251.

This sequence belongs to the class-I aminoacyl-tRNA synthetase family. Glutamate--tRNA ligase type 1 subfamily. Monomer.

It is found in the cytoplasm. The catalysed reaction is tRNA(Glu) + L-glutamate + ATP = L-glutamyl-tRNA(Glu) + AMP + diphosphate. Catalyzes the attachment of glutamate to tRNA(Glu) in a two-step reaction: glutamate is first activated by ATP to form Glu-AMP and then transferred to the acceptor end of tRNA(Glu). The polypeptide is Glutamate--tRNA ligase (Acidothermus cellulolyticus (strain ATCC 43068 / DSM 8971 / 11B)).